A 504-amino-acid chain; its full sequence is Myocilin (504 aa).

A signal peptide spans 1–32 (MRFFCARCCSFGPEMPAVQLLLLACLVWDVGA). The N-linked (GlcNAc...) asparagine glycan is linked to Asn57. The stretch at 74–184 (LQRDSSTQRL…QEVARLRRGQ (111 aa)) forms a coiled coil. 2 disordered regions span residues 106–131 (QAARPQETQEGLQRELGTLRRERDQL) and 170–200 (LESSSQEVARLRRGQCPQTRDTARAVPPGSR). Residues 122 to 131 (GTLRRERDQL) show a composition bias toward basic and acidic residues. One can recognise an Olfactomedin-like domain in the interval 244-503 (GCGELVWVGE…MVTYDIKLSK (260 aa)). Cys245 and Cys433 are oxidised to a cystine. The Ca(2+) site is built by Asp380, Asn428, Ala429, Ile477, and Asp478. The short motif at 502 to 504 (SKM) is the Microbody targeting signal element.

Homodimer (via N-terminus). Can also form higher oligomers. Interacts with OLFM3, FN1, NRCAM, GLDN and NFASC. Interacts (via N-terminus) with MYL2. Interacts with SFRP1, FRZB, FZD7, FZD10, FZD1 and WIF1; regulates Wnt signaling. Interacts with SNTA1; regulates muscle hypertrophy. Interacts with ERBB2 and ERBB3; activates ERBB2-ERBB3 signaling pathway. Interacts with SNCG; affects its secretion and its aggregation. In terms of processing, different isoforms may arise by post-translational modifications. Post-translationally, glycosylated. Palmitoylated. In terms of processing, undergoes a calcium-dependent proteolytic cleavage at Arg-226 by CAPN2 in the endoplasmic reticulum. The result is the production of two fragments, one of 35 kDa containing the C-terminal olfactomedin-like domain, and another of 20 kDa containing the N-terminal leucine zipper-like domain. In terms of tissue distribution, detected in aqueous humor. Detected in the eye (at protein level). Widely expressed. Highly expressed in various types of muscle, ciliary body, papillary sphincter, skeletal muscle, heart, and bone marrow-derived mesenchymal stem cells. Expressed predominantly in the retina. In normal eyes, found in the inner uveal meshwork region and the anterior portion of the meshwork. In contrast, in many glaucomatous eyes, it is found in more regions of the meshwork and seems to be expressed at higher levels than in normal eyes, regardless of the type or clinical severity of glaucoma. The myocilin 35 kDa fragment is detected in aqueous humor and to a lesser extent in iris and ciliary body.

The protein localises to the secreted. It localises to the golgi apparatus. It is found in the cytoplasmic vesicle. Its subcellular location is the extracellular space. The protein resides in the extracellular matrix. The protein localises to the extracellular exosome. It localises to the mitochondrion. It is found in the mitochondrion intermembrane space. Its subcellular location is the mitochondrion inner membrane. The protein resides in the mitochondrion outer membrane. The protein localises to the rough endoplasmic reticulum. It localises to the cell projection. It is found in the cilium. Its subcellular location is the endoplasmic reticulum. Secreted glycoprotein regulating the activation of different signaling pathways in adjacent cells to control different processes including cell adhesion, cell-matrix adhesion, cytoskeleton organization and cell migration. Promotes substrate adhesion, spreading and formation of focal contacts. Negatively regulates cell-matrix adhesion and stress fiber assembly through Rho protein signal transduction. Modulates the organization of actin cytoskeleton by stimulating the formation of stress fibers through interactions with components of Wnt signaling pathways. Promotes cell migration through activation of PTK2 and the downstream phosphatidylinositol 3-kinase signaling. Plays a role in bone formation and promotes osteoblast differentiation in a dose-dependent manner through mitogen-activated protein kinase signaling. Mediates myelination in the peripheral nervous system through ERBB2/ERBB3 signaling. Plays a role as a regulator of muscle hypertrophy through the components of dystrophin-associated protein complex. Involved in positive regulation of mitochondrial depolarization. Plays a role in neurite outgrowth. May participate in the obstruction of fluid outflow in the trabecular meshwork. The protein is Myocilin (MYOC) of Homo sapiens (Human).